The chain runs to 454 residues: MTQLSVVILAAGKGTRMYSDLPKVLHTVAGKPMVQHVIDTAKQIDAKQIHLIYGHGGELLQQRLSSEPVNWVLQAEQLGTGHAMQQAAPFFADDENILMLYGDAPLITKETLERLIAAKPANGIALLTVELENPNGYGRIIRENGSVVAIVEQKDANAEQLKICEVNTGVMVASGASFKKWLANLNNNNAQGEYYITDVIAMANQDGYKVQAVQASEFMEVEGANNRLQLAALERFYQKTQAEKLLLAGVRLIDPARFDIRGSLTHGKDVEIDVNVIIEGEVKLGNRVRICAGCVLKNCEIGDDVEIKPYSVIEDAVVGKAAQIGPFSRLRPGANLAEETHVGNFVEIKNAQIGKGSKVNHLTYVGDAEVGSNCNIGAGVITCNYDGANKFKTIIGNNVFVGSDSQLVAPVTIADGATIGAGATVTKDVAENELVISRVPQRHIQGWQRPTKKK.

The segment at 1–227 (MTQLSVVILA…FMEVEGANNR (227 aa)) is pyrophosphorylase. Residues 9–12 (LAAG), Lys-23, Gln-74, 79–80 (GT), 101–103 (YGD), Gly-138, Glu-152, Asn-167, and Asn-225 contribute to the UDP-N-acetyl-alpha-D-glucosamine site. Mg(2+) is bound at residue Asp-103. Asn-225 lines the Mg(2+) pocket. The tract at residues 228–248 (LQLAALERFYQKTQAEKLLLA) is linker. The N-acetyltransferase stretch occupies residues 249 to 454 (GVRLIDPARF…QGWQRPTKKK (206 aa)). Arg-331 and Lys-349 together coordinate UDP-N-acetyl-alpha-D-glucosamine. His-361 (proton acceptor) is an active-site residue. Positions 364 and 375 each coordinate UDP-N-acetyl-alpha-D-glucosamine. Acetyl-CoA-binding positions include Ala-378, 384–385 (NY), Ser-403, Ala-421, and Arg-438.

This sequence in the N-terminal section; belongs to the N-acetylglucosamine-1-phosphate uridyltransferase family. In the C-terminal section; belongs to the transferase hexapeptide repeat family. Homotrimer. Mg(2+) is required as a cofactor.

The protein localises to the cytoplasm. The enzyme catalyses alpha-D-glucosamine 1-phosphate + acetyl-CoA = N-acetyl-alpha-D-glucosamine 1-phosphate + CoA + H(+). The catalysed reaction is N-acetyl-alpha-D-glucosamine 1-phosphate + UTP + H(+) = UDP-N-acetyl-alpha-D-glucosamine + diphosphate. Its pathway is nucleotide-sugar biosynthesis; UDP-N-acetyl-alpha-D-glucosamine biosynthesis; N-acetyl-alpha-D-glucosamine 1-phosphate from alpha-D-glucosamine 6-phosphate (route II): step 2/2. It functions in the pathway nucleotide-sugar biosynthesis; UDP-N-acetyl-alpha-D-glucosamine biosynthesis; UDP-N-acetyl-alpha-D-glucosamine from N-acetyl-alpha-D-glucosamine 1-phosphate: step 1/1. It participates in bacterial outer membrane biogenesis; LPS lipid A biosynthesis. Functionally, catalyzes the last two sequential reactions in the de novo biosynthetic pathway for UDP-N-acetylglucosamine (UDP-GlcNAc). The C-terminal domain catalyzes the transfer of acetyl group from acetyl coenzyme A to glucosamine-1-phosphate (GlcN-1-P) to produce N-acetylglucosamine-1-phosphate (GlcNAc-1-P), which is converted into UDP-GlcNAc by the transfer of uridine 5-monophosphate (from uridine 5-triphosphate), a reaction catalyzed by the N-terminal domain. The sequence is that of Bifunctional protein GlmU from Actinobacillus pleuropneumoniae serotype 3 (strain JL03).